The following is a 47-amino-acid chain: Glyceraldehyde-3-phosphate dehydrogenase, cytosolic (47 aa).

The protein belongs to the glyceraldehyde-3-phosphate dehydrogenase family. As to quaternary structure, homotetramer.

Its subcellular location is the cytoplasm. It carries out the reaction D-glyceraldehyde 3-phosphate + phosphate + NAD(+) = (2R)-3-phospho-glyceroyl phosphate + NADH + H(+). The protein operates within carbohydrate degradation; glycolysis; pyruvate from D-glyceraldehyde 3-phosphate: step 1/5. The chain is Glyceraldehyde-3-phosphate dehydrogenase, cytosolic from Pseudotsuga menziesii (Douglas-fir).